The sequence spans 451 residues: Pre-mRNA-splicing factor PRP46 (451 aa).

WD repeat units lie at residues 137-168 (GHLGWVRCVAIDPVDNEWFITGSNDTTMKVWD), 180-210 (GHVMTVRDVAVSDRHPYLFSVSEDKTVKCWD), 222-252 (GHLSGVRTVSIHPTLDLIATAGRDSVIKLWD), 264-294 (GHKGPINQVQCTPVDPQVVSSSTDATVRLWD), 306-335 (HHKRSVRATALHPKEFSVASACTDDIRSWG), 348-377 (EKTGIINTLSINQDDVLFAGGDNGVLSFYD), and 397-427 (EGERSVLCSTFDKTGLRLITGEADKSIKIWK).

Belongs to the WD repeat PRL1/PRL2 family. As to quaternary structure, belongs to the CWC complex (or CEF1-associated complex), a spliceosome subcomplex composed of the U2, U5 and U6 snRNAs and at least BUD13, BUD31, BRR2, CDC40, CEF1, CLF1, CUS1, CWC2, CWC15, CWC21, CWC22, CWC23, CWC24, CWC25, CWC27, ECM2, HSH155, IST3, ISY1, LEA1, MSL1, NTC20, PRP8, PRP9, PRP11, PRP19, PRP21, PRP22, PRP45, PRP46, SLU7, SMB1, SMD1, SMD2, SMD3, SMX2, SMX3, SNT309, SNU114, SPP2, SYF1, SYF2, RSE1 and YJU2. Interacts with CEF1, CLF1, NTC20, PRP45 and SYF1.

It localises to the cytoplasm. The protein localises to the nucleus. Its function is as follows. Involved in pre-mRNA splicing. May also be required for cell cycle progression at G2/M. The sequence is that of Pre-mRNA-splicing factor PRP46 (PRP46) from Saccharomyces cerevisiae (strain ATCC 204508 / S288c) (Baker's yeast).